A 156-amino-acid polypeptide reads, in one-letter code: Succinate dehydrogenase assembly factor 2-B, mitochondrial (156 aa).

The transit peptide at 1–24 (MLRQFIISRVGRRLQLPMITQSRL) directs the protein to the mitochondrion.

Belongs to the SDHAF2 family. In terms of assembly, interacts with the flavoprotein subunit within the SDH catalytic dimer.

Its subcellular location is the mitochondrion matrix. Its function is as follows. Plays an essential role in the assembly of succinate dehydrogenase (SDH), an enzyme complex (also referred to as respiratory complex II) that is a component of both the tricarboxylic acid (TCA) cycle and the mitochondrial electron transport chain, and which couples the oxidation of succinate to fumarate with the reduction of ubiquinone (coenzyme Q) to ubiquinol. Required for flavinylation (covalent attachment of FAD) of the flavoprotein subunit of the SDH catalytic dimer. This Drosophila sechellia (Fruit fly) protein is Succinate dehydrogenase assembly factor 2-B, mitochondrial.